The following is a 292-amino-acid chain: 3-methyl-2-oxobutanoate hydroxymethyltransferase 2 (292 aa).

Mg(2+)-binding residues include Asp-52 and Asp-91. Residues 52–53 (DS), Asp-91, and Lys-120 contribute to the 3-methyl-2-oxobutanoate site. Mg(2+) is bound at residue Glu-122. Glu-189 acts as the Proton acceptor in catalysis.

Belongs to the PanB family. As to quaternary structure, homodecamer; pentamer of dimers. The cofactor is Mg(2+).

It is found in the cytoplasm. It carries out the reaction 3-methyl-2-oxobutanoate + (6R)-5,10-methylene-5,6,7,8-tetrahydrofolate + H2O = 2-dehydropantoate + (6S)-5,6,7,8-tetrahydrofolate. The protein operates within cofactor biosynthesis; (R)-pantothenate biosynthesis; (R)-pantoate from 3-methyl-2-oxobutanoate: step 1/2. Its function is as follows. Catalyzes the reversible reaction in which hydroxymethyl group from 5,10-methylenetetrahydrofolate is transferred onto alpha-ketoisovalerate to form ketopantoate. In Bradyrhizobium diazoefficiens (strain JCM 10833 / BCRC 13528 / IAM 13628 / NBRC 14792 / USDA 110), this protein is 3-methyl-2-oxobutanoate hydroxymethyltransferase 2.